Here is an 800-residue protein sequence, read N- to C-terminus: DNA topoisomerase 4 subunit A (800 aa).

Residues 31-496 (LPDVRDGLKP…ISEIKIDKEV (466 aa)) enclose the Topo IIA-type catalytic domain. Tyr-119 functions as the O-(5'-phospho-DNA)-tyrosine intermediate in the catalytic mechanism.

It belongs to the type II topoisomerase GyrA/ParC subunit family. ParC type 2 subfamily. In terms of assembly, heterotetramer composed of ParC and ParE.

It localises to the cell membrane. The enzyme catalyses ATP-dependent breakage, passage and rejoining of double-stranded DNA.. Topoisomerase IV is essential for chromosome segregation. It relaxes supercoiled DNA. Performs the decatenation events required during the replication of a circular DNA molecule. The protein is DNA topoisomerase 4 subunit A of Staphylococcus epidermidis (strain ATCC 12228 / FDA PCI 1200).